Consider the following 775-residue polypeptide: Ankyrin repeat and EF-hand domain-containing protein 1 (775 aa).

ANK repeat units follow at residues 47–76 (DGLSALHLASISNDTDMVSFLLKLGAHPDV), 184–213 (TGRTALMESSREGVLEIVRGILERGGEVNA), 217–246 (DRHHAAHFAAKGGFFDILKLLFAYNGDMGL), 250–279 (DGNTPLHFAAMGGFADCCKYIAQRGCDLKW), 524–553 (TYKTPLMIACASGNIDVVKFLIEKGANVNA), 557–586 (FLWTPLHFACHAGQQDIVELLVKAGASIDA), 590–619 (NNSTPLSRAIESCRLDTVKYLLDMGAKFQI), and 623–652 (KGHAAMDIAKAYADYRIIDMIKEKLDNLPK).

The sequence is that of Ankyrin repeat and EF-hand domain-containing protein 1 (Ankef1) from Mus musculus (Mouse).